Here is a 381-residue protein sequence, read N- to C-terminus: L-lactate dehydrogenase (381 aa).

The FMN hydroxy acid dehydrogenase domain occupies 1-380; it reads MIISSASDYR…KPEALVDLSK (380 aa). Tyrosine 24 is a binding site for substrate. 2 residues coordinate FMN: serine 106 and glutamine 127. Tyrosine 129 contacts substrate. FMN is bound at residue threonine 155. Arginine 164 is a substrate binding site. Position 251 (lysine 251) interacts with FMN. Histidine 275 serves as the catalytic Proton acceptor. A substrate-binding site is contributed by arginine 278. Position 306 to 330 (306 to 330) interacts with FMN; sequence DSGIRNGLDIVRMLALGADATMLGR.

Belongs to the FMN-dependent alpha-hydroxy acid dehydrogenase family. Requires FMN as cofactor.

It localises to the cell inner membrane. The catalysed reaction is (S)-lactate + A = pyruvate + AH2. In terms of biological role, catalyzes the conversion of L-lactate to pyruvate. Is coupled to the respiratory chain. This Haemophilus influenzae (strain PittEE) protein is L-lactate dehydrogenase.